The chain runs to 249 residues: ATP synthase subunit a, chloroplastic (249 aa).

5 helical membrane-spanning segments follow: residues 38–58 (AQVL…AVLA), 97–117 (VPFI…GALL), 136–156 (INTT…AGLH), 201–221 (LVVA…MMFL), and 222–242 (GLFT…AYIG).

Belongs to the ATPase A chain family. As to quaternary structure, F-type ATPases have 2 components, CF(1) - the catalytic core - and CF(0) - the membrane proton channel. CF(1) has five subunits: alpha(3), beta(3), gamma(1), delta(1), epsilon(1). CF(0) has four main subunits: a, b, b' and c.

Its subcellular location is the plastid. The protein localises to the chloroplast thylakoid membrane. In terms of biological role, key component of the proton channel; it plays a direct role in the translocation of protons across the membrane. This chain is ATP synthase subunit a, chloroplastic, found in Physcomitrium patens (Spreading-leaved earth moss).